A 94-amino-acid chain; its full sequence is CRISPR-associated endoribonuclease Cas2 (94 aa).

This sequence belongs to the CRISPR-associated endoribonuclease Cas2 protein family. E.coli-subtype subfamily. As to quaternary structure, homodimer. Part of the Cas1-Cas2 complex. Forms a hexamer with 2 Cas1 dimers sandwiching a Cas2 dimer. The DNA lies across a flat surface extending from 1 Cas1 dimer, across the Cas2 dimer and contacting the other Cas1 dimer. Only 1 Cas1 protein from each dimer is catalytic, the other interacts with the Cas2 dimer and possibly target DNA.

In terms of biological role, CRISPR (clustered regularly interspaced short palindromic repeat), is an adaptive immune system that provides protection against mobile genetic elements (viruses, transposable elements and conjugative plasmids). CRISPR clusters contain sequences complementary to antecedent mobile elements and target invading nucleic acids. CRISPR clusters are transcribed and processed into CRISPR RNA (crRNA). The Cas1-Cas2 complex is involved in CRISPR adaptation, the first stage of CRISPR immunity, being required for the addition/removal of CRISPR spacers at the leader end of the CRISPR locus. The Cas1-Cas2 complex introduces staggered nicks into both strands of the CRISPR array near the leader repeat and joins the 5'-ends of the repeat strands with the 3'-ends of the new spacer sequence. Spacer DNA integration requires supercoiled target DNA and 3'-OH ends on the inserted (spacer) DNA and probably initiates with a nucleophilic attack of the C 3'-OH end of the protospacer on the minus strand of the first repeat sequence. Expression of Cas1-Cas2 in a strain lacking both genes permits spacer acquisition. Cas2 not seen to bind DNA alone; the Cas1-Cas2 complex preferentially binds CRISPR-locus DNA. Highest binding is seen to a dual forked DNA complex with 3'-overhangs and a protospacer-adjacent motif-complement specifically positioned. The protospacer DNA lies across a flat surface extending from 1 Cas1 dimer, across the Cas2 dimer and contacting the other Cas1 dimer; the 23 bp-long ds section of the DNA is bracketed by 1 Tyr-22 from each of the Cas1 dimers. Cas1 cuts within the 3'-overhang, to generate a 33-nucleotide DNA that is probably incorporated into the CRISPR leader by a cut-and-paste mechanism. This subunit's probable nuclease activity is not required for spacer acquisition. The polypeptide is CRISPR-associated endoribonuclease Cas2 (ygbF) (Escherichia coli (strain K12)).